The following is a 490-amino-acid chain: Membrane-bound lytic murein transglycosylase F (490 aa).

The first 32 residues, M1–A32, serve as a signal peptide directing secretion. The non-LT domain stretch occupies residues P33 to V269. Residues D270–L490 form an LT domain region. E316 is an active-site residue. Residues A467–L490 form a disordered region. Basic and acidic residues predominate over residues T479 to L490.

In the N-terminal section; belongs to the bacterial solute-binding protein 3 family. It in the C-terminal section; belongs to the transglycosylase Slt family.

The protein resides in the cell outer membrane. The catalysed reaction is Exolytic cleavage of the (1-&gt;4)-beta-glycosidic linkage between N-acetylmuramic acid (MurNAc) and N-acetylglucosamine (GlcNAc) residues in peptidoglycan, from either the reducing or the non-reducing ends of the peptidoglycan chains, with concomitant formation of a 1,6-anhydrobond in the MurNAc residue.. Murein-degrading enzyme that degrades murein glycan strands and insoluble, high-molecular weight murein sacculi, with the concomitant formation of a 1,6-anhydromuramoyl product. Lytic transglycosylases (LTs) play an integral role in the metabolism of the peptidoglycan (PG) sacculus. Their lytic action creates space within the PG sacculus to allow for its expansion as well as for the insertion of various structures such as secretion systems and flagella. The polypeptide is Membrane-bound lytic murein transglycosylase F (Pseudomonas aeruginosa (strain ATCC 15692 / DSM 22644 / CIP 104116 / JCM 14847 / LMG 12228 / 1C / PRS 101 / PAO1)).